A 604-amino-acid chain; its full sequence is uncharacterized protein (604 aa).

The 284-residue stretch at 49–332 (LILVMLMVVI…LANQFNTMLS (284 aa)) folds into the ABC transmembrane type-1 domain. Transmembrane regions (helical) follow at residues 50-70 (ILVM…PFVI), 86-106 (LIPV…SLWF), 172-192 (VITF…LTLI), and 288-308 (IAAI…SIVV). Residues 366-600 (IEFRDVSFGY…KGFYSDLYES (235 aa)) enclose the ABC transporter domain. 399-406 (GPTGAGKT) contributes to the ATP binding site. Residues 510-530 (LISIARAVLADPVLLILDEAT) form a helical membrane-spanning segment.

Belongs to the ABC transporter superfamily.

It is found in the cell membrane. This is an uncharacterized protein from Bacillus subtilis (strain 168).